Consider the following 85-residue polypeptide: MNISRSEQRVLHVLAQGGYVRHQRADNGRILDVLCFTRDGHVLADCTLEVFVKLRRKRLIESKASSPYRISDKGRRSVRAQLDNR.

This sequence belongs to the UPF0386 family.

The polypeptide is UPF0386 protein Bind_1628 (Beijerinckia indica subsp. indica (strain ATCC 9039 / DSM 1715 / NCIMB 8712)).